The sequence spans 100 residues: Urease subunit gamma (100 aa).

Belongs to the urease gamma subunit family. In terms of assembly, heterotrimer of UreA (gamma), UreB (beta) and UreC (alpha) subunits. Three heterotrimers associate to form the active enzyme.

It localises to the cytoplasm. The enzyme catalyses urea + 2 H2O + H(+) = hydrogencarbonate + 2 NH4(+). It participates in nitrogen metabolism; urea degradation; CO(2) and NH(3) from urea (urease route): step 1/1. This Rhizobium leguminosarum bv. viciae protein is Urease subunit gamma.